An 861-amino-acid polypeptide reads, in one-letter code: ToMV resistant protein Tm-2 netted virescent (861 aa).

A coiled-coil region spans residues 63-83 (VKNLLKDIQELAGDVEDLLDD). Positions 162–388 (DDFNMLQAKL…LESMGHKVQD (227 aa)) constitute an NB-ARC domain. Position 185–192 (185–192 (GMPGLGKT)) interacts with ATP. 13 LRR repeats span residues 225–248 (LDIA…NLRS), 305–327 (LHAL…IFNF), 388–411 (DGCA…CFLY), 449–472 (LAED…TYNG), 510–536 (VARL…KLEK), 585–608 (MTCL…IVKL), 609–631 (TRLE…VWES), 652–680 (ISSF…FFEP), 689–710 (LRKL…IFSP), 712–735 (LKAL…LSSY), 736–758 (PHIA…SFPP), 784–807 (LRKL…EANG), and 810–835 (FPQL…DVSM).

Belongs to the disease resistance NB-LRR family. In terms of assembly, (Microbial infection) Interacts with tobamoviruses mouvement protein at the plasma membrane; this interaction triggers defense responses leading to programmed cell death. Binds to HSP90 proteins; this interaction seems required for defense responses toward tobamoviruses.

The protein resides in the cell membrane. Its function is as follows. Inhibitor of viral mouvements which confers resistance to some tobamoviruses including tomato mosaic virus (ToMV) (e.g. isolate L and W3) and tobacco mosaic virus (TMV), but not to resistance-breaking isolates (e.g. Ltbl) ToMV and tomato brown rugose fruit virus (ToBRFV). Elicits a hypersensitive reaction in response to avirulent (Avr) movement proteins from resistance inducing tobamoviruses (e.g. ToMV and TMV) strains, thus leading to programmed cell death. The protein is ToMV resistant protein Tm-2 netted virescent of Solanum lycopersicum (Tomato).